A 445-amino-acid polypeptide reads, in one-letter code: Phosphoglucosamine mutase (445 aa).

Catalysis depends on Ser-99, which acts as the Phosphoserine intermediate. Mg(2+) contacts are provided by Ser-99, Asp-242, Asp-244, and Asp-246. A Phosphoserine modification is found at Ser-99.

It belongs to the phosphohexose mutase family. The cofactor is Mg(2+). Activated by phosphorylation.

It catalyses the reaction alpha-D-glucosamine 1-phosphate = D-glucosamine 6-phosphate. Its function is as follows. Catalyzes the conversion of glucosamine-6-phosphate to glucosamine-1-phosphate. The polypeptide is Phosphoglucosamine mutase (Helicobacter acinonychis (strain Sheeba)).